The chain runs to 40 residues: Photosystem II reaction center protein J (40 aa).

The chain crosses the membrane as a helical span at residues 8–28 (IPLWLIGTVTGIPVIGSMGIF).

This sequence belongs to the PsbJ family. PSII is composed of 1 copy each of membrane proteins PsbA, PsbB, PsbC, PsbD, PsbE, PsbF, PsbH, PsbI, PsbJ, PsbK, PsbL, PsbM, PsbT, PsbX, PsbY, PsbZ, Psb30/Ycf12, at least 3 peripheral proteins of the oxygen-evolving complex and a large number of cofactors. It forms dimeric complexes.

The protein resides in the plastid. It localises to the chloroplast thylakoid membrane. Its function is as follows. One of the components of the core complex of photosystem II (PSII). PSII is a light-driven water:plastoquinone oxidoreductase that uses light energy to abstract electrons from H(2)O, generating O(2) and a proton gradient subsequently used for ATP formation. It consists of a core antenna complex that captures photons, and an electron transfer chain that converts photonic excitation into a charge separation. This Illicium oligandrum (Star anise) protein is Photosystem II reaction center protein J.